Here is a 397-residue protein sequence, read N- to C-terminus: Serpin B10 (397 aa).

The Nuclear localization signal signature appears at 74-77 (KKRK).

Belongs to the serpin family. Ov-serpin subfamily.

The protein resides in the nucleus. It localises to the cytoplasm. Its function is as follows. Protease inhibitor that may play a role in the regulation of protease activities during hematopoiesis and apoptosis induced by TNF. May regulate protease activities in the cytoplasm and in the nucleus. This chain is Serpin B10 (SERPINB10), found in Rhinolophus ferrumequinum (Greater horseshoe bat).